Here is a 633-residue protein sequence, read N- to C-terminus: Heterogeneous nuclear ribonucleoprotein R (633 aa).

Positions methionine 1–valine 24 are disordered. Alanine 2 is modified (N-acetylalanine). Residues lysine 13 and lysine 171 each participate in a glycyl lysine isopeptide (Lys-Gly) (interchain with G-Cter in SUMO2) cross-link. RRM domains are found at residues threonine 165–alanine 244, asparagine 246–proline 328, and lysine 341–proline 411. Residue lysine 359 forms a Glycyl lysine isopeptide (Lys-Gly) (interchain with G-Cter in SUMO2) linkage. Lysine 366 bears the N6-acetyllysine mark. A Nuclear localization signal motif is present at residues proline 412–glutamate 418. Positions proline 412–glycine 456 are disordered. Residues histidine 437–isoleucine 446 are compositionally biased toward pro residues. Residues arginine 447–glycine 567 form an RNA-binding RGG-box region. A 1; approximate repeat occupies proline 462–tyrosine 471. The tract at residues proline 462–tyrosine 497 is 3 X 11 AA approximate repeats of D-D-Y-Y-G-Y-D-Y-H-D-Y. The stretch at aspartate 472–tyrosine 482 is repeat 2. The stretch at aspartate 488 to tyrosine 497 is one 3; approximate repeat. Positions glycine 501–glycine 510 are enriched in gly residues. The tract at residues glycine 501–lysine 633 is disordered. The span at alanine 511–arginine 524 shows a compositional bias: pro residues. Residues glycine 525–glycine 541 show a composition bias toward low complexity. A compositionally biased stretch (gly residues) spans serine 558–glycine 570. Residues threonine 588 to leucine 604 show a composition bias toward polar residues. Over residues glutamine 605–glutamine 621 the composition is skewed to low complexity. Residues glutamate 622 to lysine 633 are compositionally biased toward polar residues.

In terms of assembly, identified in the spliceosome C complex. Identified in a IGF2BP1-dependent mRNP granule complex containing untranslated mRNAs. Interacts with GTPBP1.

Its subcellular location is the nucleus. The protein localises to the microsome. It localises to the nucleoplasm. The protein resides in the cytoplasm. Component of ribonucleosomes, which are complexes of at least 20 other different heterogeneous nuclear ribonucleoproteins (hnRNP). hnRNP play an important role in processing of precursor mRNA in the nucleus. The sequence is that of Heterogeneous nuclear ribonucleoprotein R (HNRNPR) from Homo sapiens (Human).